A 102-amino-acid chain; its full sequence is MQKARIRLTGTDFNKVETVCDRIREIAERTGVNLAGPIPLPTKRLVVPIRKSPDGEGTATFDRWQMRVHKRLIDIDADERALRQLMRIQVPKDIGIEIVLES.

This sequence belongs to the universal ribosomal protein uS10 family. In terms of assembly, part of the 30S ribosomal subunit.

In terms of biological role, involved in the binding of tRNA to the ribosomes. This chain is Small ribosomal subunit protein uS10, found in Methanoregula boonei (strain DSM 21154 / JCM 14090 / 6A8).